Consider the following 626-residue polypeptide: MSLEISGRELIKSKIIDAPECSGVYKMLDVSKQVIYVGKAKILKKRLTNYIKSDLDNKTLRMIANTYFLEYIITHSEVEALLLEAQLIKKFQPKFNILLKDDKSFPFIKLSLDHDFPQLLKYRGKALSDGKLFGPFASNTQVNTTLTELQKIFKLRSCTDNYFNSRTRPCLQYEIKRCYAPCVGKINKENYRVLVIQVKDFLQCRTRELQENLSKKMQELSSQMRFEEAAEIRDRIKALSYVQLKSRILDVVKNADIISIVHKDLHYCIEVALYRAGQPYGNIPYFFSSTENSTHEEVLEYFLLQFYQKQQVPSEIIMNHEINSKENVIEAIKKINNISDLSIIVPHKGDKAKLVHKAEVNALFSLEQYLKKITKNTEIMFEVKKLFDLPEIPERIEIYDNSHIQGMFAVGVMVVAGKIGFDKKEYRVFSLSSRNFTIGSEIELRDDIKGDDYGMLRQVLTRRFTRLKNEPNKLPSLMIIDGGKGHLTVVKEVMDKFGMNIPFVCMSKGRDRNAGLEQLHMQGKEVFTLDKNLLVMKYLQILRDEAHNFAIKNHRLGRSRAIKISSLDDIDGVGEARKTALLHYFGSYKAVCNATIDELAKVKGISKSLASMIFNVLNRKISLDNS.

Positions 20 to 97 constitute a GIY-YIG domain; it reads ECSGVYKMLD…IKKFQPKFNI (78 aa). One can recognise a UVR domain in the interval 207–242; it reads RELQENLSKKMQELSSQMRFEEAAEIRDRIKALSYV.

This sequence belongs to the UvrC family. As to quaternary structure, interacts with UvrB in an incision complex.

The protein localises to the cytoplasm. Functionally, the UvrABC repair system catalyzes the recognition and processing of DNA lesions. UvrC both incises the 5' and 3' sides of the lesion. The N-terminal half is responsible for the 3' incision and the C-terminal half is responsible for the 5' incision. This chain is UvrABC system protein C, found in Rickettsia typhi (strain ATCC VR-144 / Wilmington).